Here is a 514-residue protein sequence, read N- to C-terminus: MVLDLDLFRVDKGGDPALIRETQEKRFKDPGLVDQLVKADSEWRRCRFRADNLNKLKNLCSKTIGEKMKKKEPVGDDESVPENVLSFDDLTADALANLKVSQIKKVRLLIDEAILKCDAERIKLEAERFENLREIGNLLHPSVPISNDEDVDNKVERIWGDCTVRKKYSHVDLVVMVDGFEGEKGAVVAGSRGYFLKGVLVFLEQALIQYALRTLGSRGYIPIYTPFFMRKEVMQEVAQLSQFDEELYKVIGKGSEKSDDNSYDEKYLIATSEQPIAALHRDEWLRPEDLPIKYAGLSTCFRQEVGSHGRDTRGIFRVHQFEKIEQFVYSSPHDNKSWEMFEEMITTAEEFYQSLGIPYHIVNIVSGSLNHAASKKLDLEAWFPGSGAFRELVSCSNCTDYQARRLRIRYGQTKKMMDKVEFVHMLNATMCATTRTICAILENYQTEKGITVPEKLKEFMPPGLQELIPFVKPAPIEQEPSKKQKKQHEGSKKKAAARDVTLENRLQNMEVTDA.

M1 is subject to N-acetylmethionine. The interval 9-61 (RVDKGGDPALIRETQEKRFKDPGLVDQLVKADSEWRRCRFRADNLNKLKNLCS) is interaction with tRNA. S241 carries the phosphoserine modification. Positions 271 and 302 each coordinate L-serine. ATP is bound by residues 302–304 (RQE) and 318–321 (VHQF). K323 carries the post-translational modification N6-acetyllysine. Position 325 (E325) interacts with L-serine. An ATP-binding site is contributed by 391–394 (ELVS). N427 lines the L-serine pocket. The segment at 473-514 (PAPIEQEPSKKQKKQHEGSKKKAAARDVTLENRLQNMEVTDA) is disordered. Residues 479–502 (EPSKKQKKQHEGSKKKAAARDVTL) show a composition bias toward basic and acidic residues. A Nuclear localization signal motif is present at residues 482–494 (KKQKKQHEGSKKK). Residues 504-514 (NRLQNMEVTDA) show a composition bias toward polar residues.

This sequence belongs to the class-II aminoacyl-tRNA synthetase family. Type-1 seryl-tRNA synthetase subfamily. Homodimer. The tRNA molecule may bind across the dimer. Interacts with SIRT2. Interacts with METTL6; interaction is required for the tRNA N(3)-methylcytidine methyltransferase activity of METTL6. As to expression, brain.

It localises to the cytoplasm. It is found in the nucleus. It catalyses the reaction tRNA(Ser) + L-serine + ATP = L-seryl-tRNA(Ser) + AMP + diphosphate + H(+). The enzyme catalyses tRNA(Sec) + L-serine + ATP = L-seryl-tRNA(Sec) + AMP + diphosphate + H(+). The protein operates within aminoacyl-tRNA biosynthesis; selenocysteinyl-tRNA(Sec) biosynthesis; L-seryl-tRNA(Sec) from L-serine and tRNA(Sec): step 1/1. Catalyzes the attachment of serine to tRNA(Ser) in a two-step reaction: serine is first activated by ATP to form Ser-AMP and then transferred to the acceptor end of tRNA(Ser). Is probably also able to aminoacylate tRNA(Sec) with serine, to form the misacylated tRNA L-seryl-tRNA(Sec), which will be further converted into selenocysteinyl-tRNA(Sec). In the nucleus, binds to the VEGFA core promoter and prevents MYC binding and transcriptional activation by MYC. Recruits SIRT2 to the VEGFA promoter, promoting deacetylation of histone H4 at 'Lys-16' (H4K16). Thereby, inhibits the production of VEGFA and sprouting angiogenesis mediated by VEGFA. The polypeptide is Serine--tRNA ligase, cytoplasmic (Homo sapiens (Human)).